A 397-amino-acid polypeptide reads, in one-letter code: Riboflavin biosynthesis protein RibBA (397 aa).

Residues 1-199 form a DHBP synthase region; that stretch reads MFHRIEEALE…IEDLIAYRRH (199 aa). D-ribulose 5-phosphate contacts are provided by residues 26–27, D31, 138–142, and E162; these read RE and RAGHT. E27 contacts Mg(2+). Position 141 (H141) interacts with Mg(2+). A GTP cyclohydrolase II region spans residues 200 to 397; it reads HETLVTREVE…ASKLGHLLNL (198 aa). 250-254 serves as a coordination point for GTP; it reads RVHSE. Residues C255, C266, and C268 each coordinate Zn(2+). Residues Q271, 293–295, and T315 each bind GTP; that span reads EGR. D327 acts as the Proton acceptor; for GTP cyclohydrolase activity in catalysis. R329 serves as the catalytic Nucleophile; for GTP cyclohydrolase activity. GTP contacts are provided by T350 and K355.

This sequence in the N-terminal section; belongs to the DHBP synthase family. In the C-terminal section; belongs to the GTP cyclohydrolase II family. The cofactor is Mg(2+). Requires Mn(2+) as cofactor. It depends on Zn(2+) as a cofactor.

The catalysed reaction is D-ribulose 5-phosphate = (2S)-2-hydroxy-3-oxobutyl phosphate + formate + H(+). It catalyses the reaction GTP + 4 H2O = 2,5-diamino-6-hydroxy-4-(5-phosphoribosylamino)-pyrimidine + formate + 2 phosphate + 3 H(+). It participates in cofactor biosynthesis; riboflavin biosynthesis; 2-hydroxy-3-oxobutyl phosphate from D-ribulose 5-phosphate: step 1/1. The protein operates within cofactor biosynthesis; riboflavin biosynthesis; 5-amino-6-(D-ribitylamino)uracil from GTP: step 1/4. Its function is as follows. Catalyzes the conversion of D-ribulose 5-phosphate to formate and 3,4-dihydroxy-2-butanone 4-phosphate. In terms of biological role, catalyzes the conversion of GTP to 2,5-diamino-6-ribosylamino-4(3H)-pyrimidinone 5'-phosphate (DARP), formate and pyrophosphate. The chain is Riboflavin biosynthesis protein RibBA from Bacillus mycoides (strain KBAB4) (Bacillus weihenstephanensis).